The chain runs to 718 residues: Polyribonucleotide nucleotidyltransferase (718 aa).

The Mg(2+) site is built by Asp-497 and Asp-503. Residues 564–623 (PRLLTLKIEPEHIGMVIGPGGKTIKGITEQTSCKIDIADDGTVTIASSEGERAERARQMI) form the KH domain. The S1 motif domain maps to 633–701 (GEVYLGRVTR…SKGRLNLTRL (69 aa)).

Belongs to the polyribonucleotide nucleotidyltransferase family. In terms of assembly, interacts with RNase E (rne). Requires Mg(2+) as cofactor.

Its subcellular location is the cytoplasm. The enzyme catalyses RNA(n+1) + phosphate = RNA(n) + a ribonucleoside 5'-diphosphate. In terms of biological role, involved in mRNA degradation. Catalyzes the phosphorolysis of single-stranded polyribonucleotides processively in the 3'- to 5'-direction. This Synechocystis sp. (strain ATCC 27184 / PCC 6803 / Kazusa) protein is Polyribonucleotide nucleotidyltransferase.